The sequence spans 127 residues: MRALALDVGLKRIGVALCVDKKIALPLDAVLRKNRNQAANEIKNLLKIHEISLLIVGIPKGGSREEEMTRRIKHFVSLLEFDKEICFVDESGTSKEALGYGVANTRKKDGKLDSLSAFIMIKDYFAL.

It belongs to the YqgF nuclease family.

The protein resides in the cytoplasm. In terms of biological role, could be a nuclease involved in processing of the 5'-end of pre-16S rRNA. This Campylobacter jejuni subsp. jejuni serotype O:23/36 (strain 81-176) protein is Putative pre-16S rRNA nuclease.